A 402-amino-acid polypeptide reads, in one-letter code: Exodeoxyribonuclease 7 large subunit (402 aa).

Belongs to the XseA family. In terms of assembly, heterooligomer composed of large and small subunits.

It localises to the cytoplasm. It catalyses the reaction Exonucleolytic cleavage in either 5'- to 3'- or 3'- to 5'-direction to yield nucleoside 5'-phosphates.. Bidirectionally degrades single-stranded DNA into large acid-insoluble oligonucleotides, which are then degraded further into small acid-soluble oligonucleotides. In Moorella thermoacetica (strain ATCC 39073 / JCM 9320), this protein is Exodeoxyribonuclease 7 large subunit.